Consider the following 146-residue polypeptide: Hemoglobin subunit beta (146 aa).

At Thr1 the chain carries Blocked amino end (Thr). Residues 2–146 form the Globin domain; it reads HWTAEERHYI…VAHALTLQYH (145 aa). Heme b contacts are provided by His63 and His92.

It belongs to the globin family. As to quaternary structure, heterotetramer of two alpha chains and two beta chains. In terms of tissue distribution, red blood cells.

Its function is as follows. Involved in oxygen transport from the lung to the various peripheral tissues. The protein is Hemoglobin subunit beta (HBB) of Caretta caretta (Loggerhead sea turtle).